Here is a 337-residue protein sequence, read N- to C-terminus: uncharacterized protein (337 aa).

A run of 2 helical transmembrane segments spans residues 241–261 (FTLL…GAFI) and 273–293 (ASLI…IGII).

This sequence belongs to the glycosyltransferase 2 family.

Its subcellular location is the cell membrane. This is an uncharacterized protein from Bacillus subtilis (strain 168).